A 330-amino-acid chain; its full sequence is Aspartate--ammonia ligase (330 aa).

Belongs to the class-II aminoacyl-tRNA synthetase family. AsnA subfamily.

Its subcellular location is the cytoplasm. It catalyses the reaction L-aspartate + NH4(+) + ATP = L-asparagine + AMP + diphosphate + H(+). It participates in amino-acid biosynthesis; L-asparagine biosynthesis; L-asparagine from L-aspartate (ammonia route): step 1/1. The sequence is that of Aspartate--ammonia ligase from Yersinia pseudotuberculosis serotype O:1b (strain IP 31758).